The primary structure comprises 65 residues: Large ribosomal subunit protein bL33m (65 aa).

The N-terminal 8 residues, Met-1–Phe-8, are a transit peptide targeting the mitochondrion.

Belongs to the bacterial ribosomal protein bL33 family. As to quaternary structure, component of the mitochondrial large ribosomal subunit (mt-LSU). Mature mammalian 55S mitochondrial ribosomes consist of a small (28S) and a large (39S) subunit. The 28S small subunit contains a 12S ribosomal RNA (12S mt-rRNA) and 30 different proteins. The 39S large subunit contains a 16S rRNA (16S mt-rRNA), a copy of mitochondrial valine transfer RNA (mt-tRNA(Val)), which plays an integral structural role, and 52 different proteins.

It is found in the mitochondrion. This Homo sapiens (Human) protein is Large ribosomal subunit protein bL33m (MRPL33).